Reading from the N-terminus, the 184-residue chain is MSDVLRPYRDLFPQIGQRVMIDDSSVVIGDVRLADDVGIWPLVVIRGDVHYVQIGARTNIQDGSMLHVTHKSSYNPDGNPLTIGEDVTVGHKVMLHGCTIGNRVLVGMGSILLDGAIVEDDVMIGAGSLVPQNKRLESGYLYLGSPVKQIRPLSDEEKAGLRYSANNYVKWKDEYLDQGNQTQP.

Belongs to the gamma-class carbonic anhydrase family.

This Escherichia coli (strain K12) protein is Protein YrdA (yrdA).